The sequence spans 354 residues: Uroporphyrinogen decarboxylase (354 aa).

Substrate-binding positions include 27–31 (RQAGR), aspartate 77, tyrosine 154, serine 209, and histidine 327.

This sequence belongs to the uroporphyrinogen decarboxylase family. In terms of assembly, homodimer.

It localises to the cytoplasm. It carries out the reaction uroporphyrinogen III + 4 H(+) = coproporphyrinogen III + 4 CO2. The protein operates within porphyrin-containing compound metabolism; protoporphyrin-IX biosynthesis; coproporphyrinogen-III from 5-aminolevulinate: step 4/4. Catalyzes the decarboxylation of four acetate groups of uroporphyrinogen-III to yield coproporphyrinogen-III. The protein is Uroporphyrinogen decarboxylase of Shewanella frigidimarina (strain NCIMB 400).